The following is a 104-amino-acid chain: DNA-binding transcriptional repressor TubR (104 aa).

2 consecutive DNA-binding regions (HTH) follow at residues 43-50 (KTAVAEMI) and 54-65 (KPTVFATVNSFY).

As to quaternary structure, homodimer. Binds to tubC DNA, the TubR-DNA complex binds to TubZ.

A DNA-binding protein that is part of the type III plasmid partition system used to ensure correct segregation of the pBtoxis plasmid. Cooperatively binds to the centromere-like site (tubC), which may seed filament formation by the TubZ polymerizing GTPase, stabilizing TubZ filaments. TubR-tubC complexes track the depolymerizing minus end of the filament, probably pulling plasmid within the cell. Required for plasmid replication. Negatively regulates levels of TubZ; its effect on RNA expression has not been shown. Specifically binds iterons, 12-bp imperfect direct repeats that function as a plasmid origin of replication. Four TubR dimers bind to tubC, forming an extended bent DNA-protein filament with protein wrapping helically around the outside of the DNA. This Bacillus thuringiensis subsp. israelensis protein is DNA-binding transcriptional repressor TubR.